The primary structure comprises 357 residues: Peptide chain release factor 1 (357 aa).

Residue Gln234 is modified to N5-methylglutamine.

The protein belongs to the prokaryotic/mitochondrial release factor family. Post-translationally, methylated by PrmC. Methylation increases the termination efficiency of RF1.

Its subcellular location is the cytoplasm. Peptide chain release factor 1 directs the termination of translation in response to the peptide chain termination codons UAG and UAA. This chain is Peptide chain release factor 1, found in Lactococcus lactis subsp. cremoris (strain SK11).